Consider the following 402-residue polypeptide: Type II NADH:quinone oxidoreductase (402 aa).

FAD contacts are provided by residues 12-16, 39-40, and valine 83; these read GAGYA and NK. Glutamate 172 is an active-site residue. Residues aspartate 302, 319–320, and lysine 379 each bind FAD; that span reads AQ.

Belongs to the NADH dehydrogenase family. The cofactor is FAD.

It localises to the cell membrane. It catalyses the reaction a quinone + NADH + H(+) = a quinol + NAD(+). Alternative, nonproton pumping NADH:quinone oxidoreductase that delivers electrons to the respiratory chain by oxidation of NADH and reduction of quinones, and contributes to the regeneration of NAD(+). The polypeptide is Type II NADH:quinone oxidoreductase (Staphylococcus saprophyticus subsp. saprophyticus (strain ATCC 15305 / DSM 20229 / NCIMB 8711 / NCTC 7292 / S-41)).